A 301-amino-acid chain; its full sequence is Glycine--tRNA ligase alpha subunit (301 aa).

The protein belongs to the class-II aminoacyl-tRNA synthetase family. Tetramer of two alpha and two beta subunits.

It localises to the cytoplasm. It catalyses the reaction tRNA(Gly) + glycine + ATP = glycyl-tRNA(Gly) + AMP + diphosphate. The protein is Glycine--tRNA ligase alpha subunit of Bordetella avium (strain 197N).